A 100-amino-acid polypeptide reads, in one-letter code: Nucleoid-associated protein jhp_0031 (100 aa).

The protein belongs to the YbaB/EbfC family. Homodimer.

It localises to the cytoplasm. The protein localises to the nucleoid. Binds to DNA and alters its conformation. May be involved in regulation of gene expression, nucleoid organization and DNA protection. This chain is Nucleoid-associated protein jhp_0031, found in Helicobacter pylori (strain J99 / ATCC 700824) (Campylobacter pylori J99).